A 384-amino-acid chain; its full sequence is DNA dC-&gt;dU-editing enzyme APOBEC-3G (384 aa).

The interval 1–60 is essential for cytoplasmic localization; that stretch reads MNPQFRNMVDGMDPHKFSYNFKNRPILSRRNTVWLCYEVKTKGPSRPPLDAKIFRGQVYF. CMP/dCMP-type deaminase domains are found at residues 29–138 and 214–328; these read RRNT…LRSL and GRHE…LRTL. Thr-32 is modified (phosphothreonine; by PKA). The Zn(2+) site is built by His-65, Cys-97, and Cys-100. Positions 209 to 336 are necessary for homooligomerization; sequence EPCVEGRHET…TLDEAEAKIS (128 aa). An interaction with DNA region spans residues 213–215; the sequence is EGR. Residue Thr-218 is modified to Phosphothreonine; by PKA and CAMK2. His-257 is a Zn(2+) binding site. Glu-259 (proton donor) is an active-site residue. 2 residues coordinate Zn(2+): Cys-288 and Cys-291. The interval 313 to 320 is interaction with DNA; the sequence is RIYDDQGR.

This sequence belongs to the cytidine and deoxycytidylate deaminase family. Homodimer. Zn(2+) is required as a cofactor.

It localises to the cytoplasm. Its subcellular location is the nucleus. The protein resides in the P-body. It catalyses the reaction a 2'-deoxycytidine in single-stranded DNA + H2O + H(+) = a 2'-deoxyuridine in single-stranded DNA + NH4(+). Its function is as follows. DNA deaminase (cytidine deaminase) which acts as an inhibitor of retrovirus replication and retrotransposon mobility. After the penetration of retroviral nucleocapsids into target cells of infection and the initiation of reverse transcription, it can induce the conversion of cytosine to uracil in the minus-sense single-strand viral DNA, leading to G-to-A hypermutations in the subsequent plus-strand viral DNA. The resultant detrimental levels of mutations in the proviral genome, along with a deamination-independent mechanism that works prior to the proviral integration, together exert efficient antiretroviral effects in infected target cells. Selectively targets single-stranded DNA and does not deaminate double-stranded DNA or single- or double-stranded RNA. The polypeptide is DNA dC-&gt;dU-editing enzyme APOBEC-3G (APOBEC3G) (Pongo pygmaeus (Bornean orangutan)).